A 278-amino-acid chain; its full sequence is Expansin-B17 (278 aa).

Positions Met-1–Ala-26 are cleaved as a signal peptide. Residues Gly-66–Lys-176 enclose the Expansin-like EG45 domain. 3 disulfide bridges follow: Cys-69–Cys-98, Cys-101–Cys-171, and Cys-106–Cys-112. In terms of domain architecture, Expansin-like CBD spans Phe-189–Ser-270.

Belongs to the expansin family. Expansin B subfamily.

The protein localises to the secreted. The protein resides in the cell wall. It localises to the membrane. Its function is as follows. May cause loosening and extension of plant cell walls by disrupting non-covalent bonding between cellulose microfibrils and matrix glucans. No enzymatic activity has been found. May be required for rapid internodal elongation in deepwater rice during submergence. This Oryza sativa subsp. japonica (Rice) protein is Expansin-B17 (EXPB17).